The sequence spans 1381 residues: Hepatocyte growth factor receptor (1381 aa).

Positions 1 to 24 (MKAPAVLAPGILLLLFTLVQRSNG) are cleaved as a signal peptide. Residues 25-932 (ECKEALTKSE…VIVQPDQNFT (908 aa)) lie on the Extracellular side of the membrane. One can recognise a Sema domain in the interval 27–515 (KEALTKSEMN…TGKKITKIPL (489 aa)). A glycan (N-linked (GlcNAc...) asparagine) is linked at Asn45. Intrachain disulfides connect Cys95-Cys101, Cys98-Cys160, Cys133-Cys141, and Cys172-Cys175. N-linked (GlcNAc...) asparagine glycosylation is present at Asn106. Asn149 is a glycosylation site (N-linked (GlcNAc...) asparagine). Residue Asn202 is glycosylated (N-linked (GlcNAc...) asparagine). 2 disulfide bridges follow: Cys298–Cys363 and Cys385–Cys397. N-linked (GlcNAc...) asparagine glycosylation is present at Asn399. 4 disulfides stabilise this stretch: Cys520–Cys538, Cys526–Cys561, Cys529–Cys545, and Cys541–Cys551. IPT/TIG domains follow at residues 563 to 655 (PTIY…FSYV), 657 to 739 (PIIT…FSYR), and 742 to 836 (PIVY…LIYV). The O-linked (Man) threonine glycan is linked to Thr582. Residues Asn607 and Asn635 are each glycosylated (N-linked (GlcNAc...) asparagine). Residues Thr676 and Thr761 are each glycosylated (O-linked (Man) threonine). Residues Asn785, Asn879, and Asn930 are each glycosylated (N-linked (GlcNAc...) asparagine). A helical transmembrane segment spans residues 933–955 (GLIAGVVSISIALLLLLGLFLWL). Over 956-1381 (KKRKQIKDLG…QDNPDGEVDT (426 aa)) the chain is Cytoplasmic. Ser966 is subject to Phosphoserine. Phosphothreonine is present on Thr977. Residues Ser990, Ser997, and Ser1000 each carry the phosphoserine modification. Position 1003 is a phosphotyrosine (Tyr1003). In terms of domain architecture, Protein kinase spans 1078–1345 (VHFNEVIGRG…RISAIFSTFI (268 aa)). ATP is bound by residues 1084 to 1092 (IGRGHFGCV) and Lys1110. Residue Asp1204 is the Proton acceptor of the active site. Positions 1212–1381 (LDEKFTVKVA…QDNPDGEVDT (170 aa)) are interaction with RANBP9. Tyr1230 is subject to Phosphotyrosine. 2 positions are modified to phosphotyrosine; by autocatalysis: Tyr1234 and Tyr1235. Thr1289 is modified (phosphothreonine). The interval 1320–1359 (WHPKAEMRPSFSELVSRISAIFSTFIGEHYVHVNATYVNV) is interaction with MUC20. 2 positions are modified to phosphotyrosine; by autocatalysis: Tyr1349 and Tyr1356. The residue at position 1365 (Tyr1365) is a Phosphotyrosine.

It belongs to the protein kinase superfamily. Tyr protein kinase family. Heterodimer made of an alpha chain (50 kDa) and a beta chain (145 kDa) which are disulfide linked. Binds PLXNB1. Interacts when phosphorylated with downstream effectors including STAT3, PIK3R1, SRC, PCLG1, GRB2 and GAB1. Interacts with SPSB1, SPSB2 and SPSB4. Interacts with INPP5D/SHIP1. When phosphorylated at Tyr-1356, interacts with INPPL1/SHIP2. Interacts with RANBP9 and RANBP10, as well as SPSB1, SPSB2, SPSB3 and SPSB4. SPSB1 binding occurs in the presence and in the absence of HGF, however HGF treatment has a positive effect on this interaction. Interacts with MUC20; prevents interaction with GRB2 and suppresses hepatocyte growth factor-induced cell proliferation. Interacts with GRB10. Interacts with PTPN1 and PTPN2. Interacts with tensin TNS3. Interacts (when phosphorylated) with tensin TNS4 (via SH2 domain); the interaction increases MET protein stability by inhibiting MET endocytosis and subsequent lysosomal degradation. Autophosphorylated in response to ligand binding on Tyr-1234 and Tyr-1235 in the kinase domain leading to further phosphorylation of Tyr-1349 and Tyr-1356 in the C-terminal multifunctional docking site. Dephosphorylated by PTPRJ at Tyr-1349 and Tyr-1365. Dephosphorylated by PTPN1 and PTPN2. In terms of processing, ubiquitinated. Ubiquitination by CBL regulates the receptor stability and activity through proteasomal degradation. Post-translationally, O-mannosylation of IPT/TIG domains by TMEM260 is required for protein maturation. O-mannosylated residues are composed of single mannose glycans that are not elongated or modified.

The protein resides in the membrane. It carries out the reaction L-tyrosyl-[protein] + ATP = O-phospho-L-tyrosyl-[protein] + ADP + H(+). Its activity is regulated as follows. In its inactive state, the C-terminal tail interacts with the catalytic domain and inhibits the kinase activity. Upon ligand binding, the C-terminal tail is displaced and becomes phosphorylated, thus increasing the kinase activity. Its function is as follows. Receptor tyrosine kinase that transduces signals from the extracellular matrix into the cytoplasm by binding to hepatocyte growth factor/HGF ligand. Regulates many physiological processes including proliferation, scattering, morphogenesis and survival. Ligand binding at the cell surface induces autophosphorylation of MET on its intracellular domain that provides docking sites for downstream signaling molecules. Following activation by ligand, interacts with the PI3-kinase subunit PIK3R1, PLCG1, SRC, GRB2, STAT3 or the adapter GAB1. Recruitment of these downstream effectors by MET leads to the activation of several signaling cascades including the RAS-ERK, PI3 kinase-AKT, or PLCgamma-PKC. The RAS-ERK activation is associated with the morphogenetic effects while PI3K/AKT coordinates prosurvival effects. During embryonic development, MET signaling plays a role in gastrulation, development and migration of muscles and neuronal precursors, angiogenesis and kidney formation. In adults, participates in wound healing as well as organ regeneration and tissue remodeling. Also promotes differentiation and proliferation of hematopoietic cells. The polypeptide is Hepatocyte growth factor receptor (MET) (Aotus nancymaae (Ma's night monkey)).